Here is a 706-residue protein sequence, read N- to C-terminus: Termination factor NPH-I homolog (706 aa).

The Helicase ATP-binding domain maps to 62 to 227 (IGQGENTRGL…VPCFNMLSGR (166 aa)). 75 to 82 (HQMGMGKT) serves as a coordination point for ATP. The DEAH box motif lies at 168–171 (DEAH). In terms of domain architecture, Helicase C-terminal spans 417–599 (QCLQPLKVLE…HLNSAFRDLL (183 aa)).

It belongs to the DEAD box helicase family. DEAH subfamily. Part of the viral DNA-directed RNA polymerase that consists of 8 polII-like subunits (RPB1, RPB2, RPB3, RPB5, RPB6, RPB7, RPB9, RPB10), a capping enzyme and a termination factor.

It localises to the virion. Putative DNA-dependent ATPase required for providing the needed energy to achieve the termination of early transcripts. The chain is Termination factor NPH-I homolog from African swine fever virus (isolate Tick/South Africa/Pretoriuskop Pr4/1996) (ASFV).